We begin with the raw amino-acid sequence, 248 residues long: Triosephosphate isomerase (248 aa).

Substrate is bound at residue lysine 12. The Electrophile role is filled by histidine 94. The Proton acceptor role is filled by glutamate 165.

This sequence belongs to the triosephosphate isomerase family. In terms of assembly, homodimer.

The enzyme catalyses D-glyceraldehyde 3-phosphate = dihydroxyacetone phosphate. Its pathway is carbohydrate biosynthesis; gluconeogenesis. The protein operates within carbohydrate degradation; glycolysis; D-glyceraldehyde 3-phosphate from glycerone phosphate: step 1/1. This is Triosephosphate isomerase (Tpi) from Bombyx mori (Silk moth).